A 422-amino-acid polypeptide reads, in one-letter code: UDP-N-acetylglucosamine 1-carboxyvinyltransferase (422 aa).

22-23 (KN) is a binding site for phosphoenolpyruvate. Arg94 lines the UDP-N-acetyl-alpha-D-glucosamine pocket. The active-site Proton donor is Cys118. Cys118 carries the post-translational modification 2-(S-cysteinyl)pyruvic acid O-phosphothioketal. Residues 123-127 (RPIDL), Asp309, and Leu331 contribute to the UDP-N-acetyl-alpha-D-glucosamine site.

It belongs to the EPSP synthase family. MurA subfamily.

It is found in the cytoplasm. The enzyme catalyses phosphoenolpyruvate + UDP-N-acetyl-alpha-D-glucosamine = UDP-N-acetyl-3-O-(1-carboxyvinyl)-alpha-D-glucosamine + phosphate. It participates in cell wall biogenesis; peptidoglycan biosynthesis. Its function is as follows. Cell wall formation. Adds enolpyruvyl to UDP-N-acetylglucosamine. In Sulfurimonas denitrificans (strain ATCC 33889 / DSM 1251) (Thiomicrospira denitrificans (strain ATCC 33889 / DSM 1251)), this protein is UDP-N-acetylglucosamine 1-carboxyvinyltransferase.